The sequence spans 103 residues: uncharacterized protein (103 aa).

This is an uncharacterized protein from Acanthamoeba polyphaga mimivirus (APMV).